Reading from the N-terminus, the 683-residue chain is Phenoloxidase 3 (683 aa).

The propeptide occupies 1 to 48; sequence MADKKNLLLLFDHPTEPVFMDKGGNGTVFDVPDSYVTDRYNQMCKKVQ. Positions 209, 213, and 239 each coordinate Cu cation. Glu351 (proton acceptor) is an active-site residue. N-linked (GlcNAc...) asparagine glycosylation is present at Asn358. 3 residues coordinate Cu cation: His366, His370, and His406. Asn492 and Asn546 each carry an N-linked (GlcNAc...) asparagine glycan. 2 cysteine pairs are disulfide-bonded: Cys574–Cys617 and Cys576–Cys624.

The protein belongs to the tyrosinase family. It depends on Cu(2+) as a cofactor. Post-translationally, upon activation, a trypsin type protease cleaves prophenol oxidase to yield the active enzyme.

Its subcellular location is the secreted. It catalyses the reaction 2 L-dopa + O2 = 2 L-dopaquinone + 2 H2O. The enzyme catalyses L-tyrosine + O2 = L-dopaquinone + H2O. Functionally, this is a copper-containing oxidase that functions in the formation of pigments such as melanins and other polyphenolic compounds. Catalyzes the rate-limiting conversions of tyrosine to DOPA, DOPA to DOPA-quinone and possibly 5,6 dihydroxyindole to indole-5'6 quinone. This chain is Phenoloxidase 3 (PPO3), found in Drosophila melanogaster (Fruit fly).